A 446-amino-acid chain; its full sequence is Coiled-coil domain-containing protein 112 (446 aa).

Coiled coils occupy residues K35–D116 and E219–R400. 2 disordered regions span residues F253–K272 and L390–I430. Residues N255–R268 are compositionally biased toward basic and acidic residues.

The protein localises to the cytoplasm. It is found in the cytoskeleton. Its subcellular location is the microtubule organizing center. The protein resides in the centrosome. It localises to the centriolar satellite. In Homo sapiens (Human), this protein is Coiled-coil domain-containing protein 112 (CCDC112).